Consider the following 92-residue polypeptide: CRISPR-associated endoribonuclease Cas2 (92 aa).

Residue Asp-9 coordinates Mg(2+).

This sequence belongs to the CRISPR-associated endoribonuclease Cas2 protein family. In terms of assembly, homodimer, forms a heterotetramer with a Cas1 homodimer. It depends on Mg(2+) as a cofactor.

In terms of biological role, CRISPR (clustered regularly interspaced short palindromic repeat), is an adaptive immune system that provides protection against mobile genetic elements (viruses, transposable elements and conjugative plasmids). CRISPR clusters contain sequences complementary to antecedent mobile elements and target invading nucleic acids. CRISPR clusters are transcribed and processed into CRISPR RNA (crRNA). Functions as a ssRNA-specific endoribonuclease. Involved in the integration of spacer DNA into the CRISPR cassette. The chain is CRISPR-associated endoribonuclease Cas2 from Aeropyrum pernix (strain ATCC 700893 / DSM 11879 / JCM 9820 / NBRC 100138 / K1).